Here is a 231-residue protein sequence, read N- to C-terminus: Large ribosomal subunit protein uL1 (231 aa).

This sequence belongs to the universal ribosomal protein uL1 family. Part of the 50S ribosomal subunit.

Functionally, binds directly to 23S rRNA. The L1 stalk is quite mobile in the ribosome, and is involved in E site tRNA release. Protein L1 is also a translational repressor protein, it controls the translation of the L11 operon by binding to its mRNA. This chain is Large ribosomal subunit protein uL1, found in Saccharophagus degradans (strain 2-40 / ATCC 43961 / DSM 17024).